A 193-amino-acid chain; its full sequence is Secreted RxLR effector protein 126 (193 aa).

The signal sequence occupies residues 1-20 (MRYLLAVLIAAAFVISSGTS). The short motif at 50-64 (RMLQTKAVNGLEEER) is the RxLR-dEER element.

It belongs to the RxLR effector family.

It is found in the secreted. The protein resides in the host membrane. Functionally, secreted effector that completely suppresses the host cell death induced by cell death-inducing proteins. This Plasmopara viticola (Downy mildew of grapevine) protein is Secreted RxLR effector protein 126.